A 152-amino-acid polypeptide reads, in one-letter code: Isoquinoline 1-oxidoreductase subunit alpha (152 aa).

In terms of domain architecture, 2Fe-2S ferredoxin-type spans 1 to 77 (MIEFILNGQP…RQSVTTIEGL (77 aa)). [2Fe-2S] cluster-binding residues include Cys39, Cys44, and Cys47.

In terms of assembly, heterodimer of an alpha chain and a beta chain.

It carries out the reaction isoquinoline + A + H2O = isoquinolin-1(2H)-one + AH2. In terms of biological role, specific towards N-containing N-heterocyclic substrates, including isoquinoline, isoquinolin-5-ol, phthalazine and quinazoline. This is Isoquinoline 1-oxidoreductase subunit alpha (iorA) from Brevundimonas diminuta (Pseudomonas diminuta).